A 1394-amino-acid chain; its full sequence is Adhesion and penetration protein autotransporter (1394 aa).

A signal peptide spans 1 to 25 (MKKTVFRLNFLTACISLGIVSQAWA). A Peptidase S6 domain is found at 26–286 (GHTYFGIDYQ…QLVRKSYFDE (261 aa)). Residue serine 243 is part of the active site. 2 disordered regions span residues 848–870 (AYSASSNNTPRRRSLETETTPTS) and 995–1027 (TLEAKQVEPTAKTQTGEPKVRSRRAARAAFPDT). One can recognise an Autotransporter domain in the interval 1140–1394 (VDQAQSAVWT…NVGVKLGYRW (255 aa)).

Its subcellular location is the periplasm. The protein resides in the secreted. It localises to the cell surface. The protein localises to the cell outer membrane. Probable protease; promotes adherence and invasion by directly binding to a host cell structure. This Haemophilus influenzae protein is Adhesion and penetration protein autotransporter (hap).